Consider the following 452-residue polypeptide: F-box only protein 47 (452 aa).

In terms of domain architecture, F-box spans 41-91; it reads FGNFKALPLEIFQIILKYLSVKDISMLSMVSKTVSQHIINYISTSSGSKRL.

In terms of assembly, part of a SCF (SKP1-cullin-F-box) protein ligase complex. Widely expressed, with highest levels in kidney, liver and pancreas. Down-regulated in tumors.

In terms of biological role, probably recognizes and binds to some phosphorylated proteins and promotes their ubiquitination and degradation. The protein is F-box only protein 47 of Homo sapiens (Human).